Reading from the N-terminus, the 185-residue chain is Ribosome-recycling factor (185 aa).

The segment covering 131–155 has biased composition (basic and acidic residues); that stretch reads DRKNANDKIKKSEKDKEITADESKS. The interval 131-156 is disordered; that stretch reads DRKNANDKIKKSEKDKEITADESKSA.

The protein belongs to the RRF family.

It localises to the cytoplasm. Its function is as follows. Responsible for the release of ribosomes from messenger RNA at the termination of protein biosynthesis. May increase the efficiency of translation by recycling ribosomes from one round of translation to another. In Sulfurimonas denitrificans (strain ATCC 33889 / DSM 1251) (Thiomicrospira denitrificans (strain ATCC 33889 / DSM 1251)), this protein is Ribosome-recycling factor.